The following is a 275-amino-acid chain: LIM/homeobox protein Awh (275 aa).

LIM zinc-binding domains lie at 6-67 and 68-129; these read RSCA…NFGA and KCSK…TVEG. At threonine 126 the chain carries Phosphothreonine. Residues 148–207 constitute a DNA-binding region (homeobox); that stretch reads TKRVRTTFTEEQLQVLQANFQIDSNPDGQDLERIASVTGLSKRVTQVWFQNSRARQKKHI. The segment at 253–275 is disordered; the sequence is PTHESSMDELSQDSSVHCMPSEV.

In terms of tissue distribution, first detected in neuroblasts in stage 9 embryos. Expressed in all 10 abdominal segments and in the labial segment during early embryogenesis. Expressed in the stage 14 developing epithelium. By embryonic stage 16, expression is refined to the abdominal histoblasts and salivary gland imaginal ring cells. Expressed in both larval and imaginal cells between the salivary gland and the salivary gland imaginal ring, in late third instar larvae. Also expressed in specific areas of the larval wing, leg and eye-antennal disks.

The protein resides in the nucleus. Probable transcription factor. Required for the establishment of a subset of imaginal tissues: the abdominal histoblasts and the salivary gland imaginal rings. In Drosophila melanogaster (Fruit fly), this protein is LIM/homeobox protein Awh.